Here is a 366-residue protein sequence, read N- to C-terminus: MTIKTEEFLLNLGPQHPSTHGVFRIVLTLDGETVVKAVPVPGYLHRGIEKLLESRTYTQVIPYTDRLDYLAGMLMNWGYVHAVEKLMEVEIPERAEYIRVIVGELSRIASHLVATGAYAADIGGLTGFIYTFRDREEIMDLFEMISGARLTPSFMRIGGVAYDIPDGFMERCKKFVDYLPEAIKEYNTLITGNEIFQARTKNVAILSAEKAIDMSLSGPVLRATGVNYDLRKVRPYSVYERFEFEVPLGTKGDCFDRYYIRLLEMEQSARIIQQAMDQIPEGPIRAKIPKMIKPPVGEAYAEIESSKGIMGTYVVSDGSTKPYRVHFRRPSFVNLGYLNEMLRGWKIADVIAILGSIDIVLGEVDA.

This sequence belongs to the complex I 49 kDa subunit family. In terms of assembly, NDH-1 is composed of 14 different subunits. Subunits NuoB, C, D, E, F, and G constitute the peripheral sector of the complex.

It localises to the cell membrane. The enzyme catalyses a quinone + NADH + 5 H(+)(in) = a quinol + NAD(+) + 4 H(+)(out). NDH-1 shuttles electrons from NADH, via FMN and iron-sulfur (Fe-S) centers, to quinones in the respiratory chain. The immediate electron acceptor for the enzyme in this species is believed to be a menaquinone. Couples the redox reaction to proton translocation (for every two electrons transferred, four hydrogen ions are translocated across the cytoplasmic membrane), and thus conserves the redox energy in a proton gradient. The sequence is that of NADH-quinone oxidoreductase subunit D from Desulforamulus reducens (strain ATCC BAA-1160 / DSM 100696 / MI-1) (Desulfotomaculum reducens).